Consider the following 770-residue polypeptide: Metallothionein expression activator (770 aa).

Positions Leu77–Trp97 are disordered. Residues Ser80, Ser122, Ser247, Ser249, and Ser253 each carry the phosphoserine modification. Position 259 is a phosphothreonine (Thr259). Residues Pro286–Leu323 are disordered. Residues Arg294 to Pro304 are compositionally biased toward polar residues. 3 positions are modified to phosphoserine: Ser385, Ser392, and Ser483. Thr486 and Thr501 each carry phosphothreonine. Ser564 bears the Phosphoserine mark. 2 C2H2-type zinc fingers span residues Phe603 to His627 and Tyr633 to His657. Residues Tyr662–Cys685 form a C2H2-type 3; atypical zinc finger. Positions Leu699 to Leu770 are disordered. Residues Ser705–Leu745 show a composition bias toward basic and acidic residues. Phosphoserine is present on residues Ser709 and Ser714. Over residues Ala754–Leu770 the composition is skewed to polar residues.

The protein localises to the nucleus. In terms of biological role, plays a role in regulating basal-level expression of CUP1. Activates EGT2 transcription in the absence of SWI5. This Saccharomyces cerevisiae (strain ATCC 204508 / S288c) (Baker's yeast) protein is Metallothionein expression activator (ACE2).